A 182-amino-acid polypeptide reads, in one-letter code: Ribosome maturation factor RimP (182 aa).

This sequence belongs to the RimP family.

It is found in the cytoplasm. Required for maturation of 30S ribosomal subunits. This Chloroherpeton thalassium (strain ATCC 35110 / GB-78) protein is Ribosome maturation factor RimP.